Reading from the N-terminus, the 104-residue chain is Iron-sulfur cluster assembly protein CyaY (104 aa).

The protein belongs to the frataxin family.

Functionally, involved in iron-sulfur (Fe-S) cluster assembly. May act as a regulator of Fe-S biogenesis. This is Iron-sulfur cluster assembly protein CyaY from Vibrio campbellii (strain ATCC BAA-1116).